Reading from the N-terminus, the 367-residue chain is High osmolarity signaling protein SHO1 (367 aa).

The Cytoplasmic portion of the chain corresponds to 1-32 (MSISSKIRPTPRKPSRMATDHSFKMKNFYADP). The helical transmembrane segment at 33–53 (FAISSISLAIVSWVIAIGGSI) threads the bilayer. The Extracellular segment spans residues 54–65 (SSASTNESFPRF). N-linked (GlcNAc...) asparagine glycosylation is present at asparagine 59. Residues 66–86 (TWWGIVYQFLTICSLMLFYCF) traverse the membrane as a helical segment. The Cytoplasmic portion of the chain corresponds to 87-93 (DLVDHYR). The helical transmembrane segment at 94 to 114 (IFITTSIAVAFVYNTNSATNL) threads the bilayer. At 115-122 (VYADGSKK) the chain is on the extracellular side. A helical transmembrane segment spans residues 123–143 (AAASAGVILLSIINLIWILYY). At 144–367 (GGDNASPTNR…LIDGPEEMHR (224 aa)) the chain is on the cytoplasmic side. Position 166 is a phosphoserine (serine 166). Residues 253–276 (NAKETNDNSNNQTNTNIGNTFDTD) are disordered. A compositionally biased stretch (low complexity) spans 259-272 (DNSNNQTNTNIGNT). Residues 300–361 (NFIYKAKALY…PSNYVQLIDG (62 aa)) form the SH3 domain.

This sequence belongs to the SHO1 family. Forms homooligomers. Interacts (via the SH3 domain) with PBS2. Interacts with FUS1, STE11, STE50 and RNA polymerase II.

Its subcellular location is the cell membrane. It is found in the bud. The protein localises to the bud neck. The protein resides in the cell projection. In terms of biological role, plasma membrane osmosensor that activates the high osmolarity glycerol (HOG) MAPK signaling pathway in response to high osmolarity. Detects changes in external osmolarity and activates PBS2 through the stimulation of STE11 and targets PBS2 to the plasma membrane. PBS2 activation leads to changes in glycerol production that helps to balance the intracellular and external osmotic pressures. Activates also HOG1 in response to heat stress and mediates resistance to oxidative stress. Involved in the regulation of the mating pathway. May be a receptor that feeds into the pseudohyphal growth pathway. The sequence is that of High osmolarity signaling protein SHO1 (SHO1) from Saccharomyces cerevisiae (strain YJM789) (Baker's yeast).